Reading from the N-terminus, the 201-residue chain is Probable GTP-binding protein EngB (201 aa).

Residues 21-191 enclose the EngB-type G domain; that stretch reads AAPQIILAGR…WNLLDVTAIP (171 aa). GTP-binding positions include 29 to 36, 56 to 60, 75 to 78, 142 to 145, and 168 to 172; these read GRSNVGKS, GKTRS, DLPG, TKSD, and ICVSS. The Mg(2+) site is built by S36 and T58.

The protein belongs to the TRAFAC class TrmE-Era-EngA-EngB-Septin-like GTPase superfamily. EngB GTPase family. Mg(2+) is required as a cofactor.

Necessary for normal cell division and for the maintenance of normal septation. The sequence is that of Probable GTP-binding protein EngB from Maridesulfovibrio salexigens (strain ATCC 14822 / DSM 2638 / NCIMB 8403 / VKM B-1763) (Desulfovibrio salexigens).